The chain runs to 446 residues: Homocitrate synthase, mitochondrial (446 aa).

Positions 1–14 (MCATDNAPAANAAP) are enriched in low complexity. The interval 1 to 36 (MCATDNAPAANAAPEKPSNVGVEVGHTGEQTNPYGA) is disordered. The region spanning 48–307 (FQLIESTLRE…HKLRDLENLV (260 aa)) is the Pyruvate carboxyltransferase domain. Position 56 (R56) interacts with 2-oxoglutarate. E57 contacts Mg(2+). The 2-oxoglutarate site is built by H116, R176, and T210. 2 residues coordinate Mg(2+): H237 and H239. H334 acts as the Proton acceptor in catalysis. Positions 422 to 446 (TPTVAATEGPAVEDEPAAKKAKTEE) are disordered. Residues 437–446 (PAAKKAKTEE) show a composition bias toward basic and acidic residues.

Belongs to the alpha-IPM synthase/homocitrate synthase family. Homocitrate synthase LYS20/LYS21 subfamily. Mg(2+) is required as a cofactor. It depends on Mn(2+) as a cofactor.

The protein localises to the mitochondrion. The catalysed reaction is acetyl-CoA + 2-oxoglutarate + H2O = (2R)-homocitrate + CoA + H(+). It participates in amino-acid biosynthesis; L-lysine biosynthesis via AAA pathway; L-alpha-aminoadipate from 2-oxoglutarate: step 1/5. Functionally, catalyzes the aldol-type condensation of 2-oxoglutarate with acetyl-CoA to yield homocitrate. Carries out the first step of the alpha-aminoadipate (AAA) lysine biosynthesis pathway. This Yarrowia lipolytica (strain CLIB 122 / E 150) (Yeast) protein is Homocitrate synthase, mitochondrial (LYS1).